The chain runs to 266 residues: Glucagon-1 (266 aa).

The N-terminal stretch at 1-20 (MKSTCYMIGILLMILQNTYQ) is a signal peptide. 6 consecutive propeptides follow at residues 21–50 (SPVPETDANSRSVKAARNEAVDDSEQLKEV), 84–95 (SGELSRRNADYE), 136–140 (NAEFE), 175–178 (IRYS), 213–224 (NFSEVHSVEEMD), and 261–266 (DLLEEQ). Positions 23 to 32 (VPETDANSRS) are enriched in polar residues. The tract at residues 23-44 (VPETDANSRSVKAARNEAVDDS) is disordered.

Belongs to the glucagon family.

It localises to the secreted. Functionally, promotes hydrolysis of glycogen and lipids, and raises the blood sugar level. In Xenopus laevis (African clawed frog), this protein is Glucagon-1 (gcg1).